The primary structure comprises 345 residues: Methionine import ATP-binding protein MetN 2 (345 aa).

The ABC transporter domain occupies 4–243; it reads IELRHVKKEF…PQTEIAKRFI (240 aa). 40–47 serves as a coordination point for ATP; that stretch reads GYSGAGKS.

This sequence belongs to the ABC transporter superfamily. Methionine importer (TC 3.A.1.24) family. The complex is composed of two ATP-binding proteins (MetN), two transmembrane proteins (MetI) and a solute-binding protein (MetQ).

It is found in the cell membrane. The catalysed reaction is L-methionine(out) + ATP + H2O = L-methionine(in) + ADP + phosphate + H(+). It catalyses the reaction D-methionine(out) + ATP + H2O = D-methionine(in) + ADP + phosphate + H(+). Part of the ABC transporter complex MetNIQ involved in methionine import. Responsible for energy coupling to the transport system. The chain is Methionine import ATP-binding protein MetN 2 from Enterococcus faecalis (strain ATCC 700802 / V583).